A 147-amino-acid polypeptide reads, in one-letter code: Submaxillary gland androgen-regulated protein 3A (147 aa).

Positions 1-22 (MKPLNLVLGLCILVGCFLSCEC) are cleaved as a signal peptide. The segment at 27-128 (RRHDPRGPFP…ISITTPTARD (102 aa)) is disordered. Positions 33-105 (GPFPPPPPPH…PTPSIPPTGP (73 aa)) are enriched in pro residues. Tandem repeats lie at residues 43-54 (GPGIGRPHPPPF), 55-66 (GPGIGRPPPPPF), and 67-78 (GPGIGRPPPPPP). Residues 43–78 (GPGIGRPHPPPFGPGIGRPPPPPFGPGIGRPPPPPP) are 3 X 12 AA tandem repeats of G-P-G-I-G-R-P-[HP]-P-P-P-[PF]. The segment covering 108–127 (TVQATTMPAASISITTPTAR) has biased composition (polar residues).

The protein belongs to the PROL1/PROL3 family. In terms of tissue distribution, secreted into saliva by submaxillary gland.

Its subcellular location is the secreted. May play a role in protection or detoxification. The polypeptide is Submaxillary gland androgen-regulated protein 3A (Smr3a) (Mus musculus (Mouse)).